We begin with the raw amino-acid sequence, 431 residues long: Trigger factor (431 aa).

Residues 165 to 250 (GDTVVIDFDG…IHELKRKELP (86 aa)) form the PPIase FKBP-type domain.

Belongs to the FKBP-type PPIase family. Tig subfamily.

The protein resides in the cytoplasm. It carries out the reaction [protein]-peptidylproline (omega=180) = [protein]-peptidylproline (omega=0). Functionally, involved in protein export. Acts as a chaperone by maintaining the newly synthesized protein in an open conformation. Functions as a peptidyl-prolyl cis-trans isomerase. This Leuconostoc mesenteroides subsp. mesenteroides (strain ATCC 8293 / DSM 20343 / BCRC 11652 / CCM 1803 / JCM 6124 / NCDO 523 / NBRC 100496 / NCIMB 8023 / NCTC 12954 / NRRL B-1118 / 37Y) protein is Trigger factor.